Consider the following 99-residue polypeptide: MKTLCLLFAVLCLVTWTQARGAEVEENLTAQDGEVDIAGDNGDVQLTLNTDDFESFTLKTLTLGHPRVKRHSCVCRRICAARQVRKGRCSRRRRICCLY.

The signal sequence occupies residues 1–21 (MKTLCLLFAVLCLVTWTQARG). Residues 22–68 (AEVEENLTAQDGEVDIAGDNGDVQLTLNTDDFESFTLKTLTLGHPRV) constitute a propeptide that is removed on maturation. Intrachain disulfides connect C73/C97, C75/C89, and C79/C96.

This sequence belongs to the alpha-defensin family. As to expression, lowly expressed in spleen, and expressed at lower levels in kidney and lung.

The protein resides in the secreted. Its function is as follows. Has antimicrobial activity. The polypeptide is Defensin-A4 (Ornithorhynchus anatinus (Duckbill platypus)).